We begin with the raw amino-acid sequence, 142 residues long: Hemoglobin subunit alpha (142 aa).

Positions 1 to 142 (VLSAADKNNV…VSTVLTSKYR (142 aa)) constitute a Globin domain. Ser3 is subject to Phosphoserine. 2 positions are modified to N6-succinyllysine: Lys7 and Lys11. Lys16 is subject to N6-acetyllysine; alternate. Lys16 is modified (N6-succinyllysine; alternate). At Tyr24 the chain carries Phosphotyrosine. Ser35 is subject to Phosphoserine. Lys40 carries the post-translational modification N6-succinyllysine. Residue His58 participates in O2 binding. Residue His87 participates in heme b binding. At Ser102 the chain carries Phosphoserine. Thr108 bears the Phosphothreonine mark. Position 125 is a phosphoserine (Ser125). Phosphothreonine occurs at positions 135 and 138. The residue at position 139 (Ser139) is a Phosphoserine.

Belongs to the globin family. Heterotetramer of two alpha chains and two beta chains. As to expression, red blood cells.

Involved in oxygen transport from the lung to the various peripheral tissues. Its function is as follows. Hemopressin acts as an antagonist peptide of the cannabinoid receptor CNR1. Hemopressin-binding efficiently blocks cannabinoid receptor CNR1 and subsequent signaling. This chain is Hemoglobin subunit alpha (HBA), found in Procavia capensis habessinica (Abyssinian hyrax).